We begin with the raw amino-acid sequence, 113 residues long: Gonadotropin subunit beta (113 aa).

Intrachain disulfides connect Cys6/Cys54, Cys20/Cys69, Cys23/Cys107, Cys31/Cys85, Cys35/Cys87, and Cys90/Cys97. N-linked (GlcNAc...) asparagine glycosylation occurs at Asn10.

It belongs to the glycoprotein hormones subunit beta family. As to quaternary structure, heterodimer of an alpha and a beta chain.

The protein localises to the secreted. Functionally, involved in gametogenesis and steroidogenesis. This is Gonadotropin subunit beta (cgb) from Muraenesox cinereus (Daggertooth pike conger).